Here is a 350-residue protein sequence, read N- to C-terminus: MANYLRWTVGQAQALFEKPLLDLLFEAQQIHRQHFDPRQVQVSTLLSIKTGACPEDCKYCPQSSRYKTGLESERLMQVEQVLESAKKAKAAGSTRFCMGAAWKNPHERDMPYLEKMVEGVKAMGMETCMTLGTLDKQQAHRLADAGLDYYNHNLDTSPEFYGSIITTRSYQERLDTLSEVRDAGIKVCSGGIVGLGETVRDRAGLLVQLANLPKPPESVPINMLVKVKGTPLENNDDVDAFEFIRTIAVARIMMPTSYVRLSAGREQMNEQTQAMCFMAGANSIFYGCKLLTTPNPEEDKDLQLFRKLGLNPQQTATQHGDRAQQQVLTEQLLHSDSLPEDSVQFYNAAH.

One can recognise a Radical SAM core domain in the interval 38–262 (RQVQVSTLLS…MMPTSYVRLS (225 aa)). [4Fe-4S] cluster contacts are provided by Cys-53, Cys-57, and Cys-60. [2Fe-2S] cluster is bound by residues Cys-97, Cys-128, Cys-188, and Arg-260.

It belongs to the radical SAM superfamily. Biotin synthase family. Homodimer. [4Fe-4S] cluster is required as a cofactor. It depends on [2Fe-2S] cluster as a cofactor.

It catalyses the reaction (4R,5S)-dethiobiotin + (sulfur carrier)-SH + 2 reduced [2Fe-2S]-[ferredoxin] + 2 S-adenosyl-L-methionine = (sulfur carrier)-H + biotin + 2 5'-deoxyadenosine + 2 L-methionine + 2 oxidized [2Fe-2S]-[ferredoxin]. Its pathway is cofactor biosynthesis; biotin biosynthesis; biotin from 7,8-diaminononanoate: step 2/2. Functionally, catalyzes the conversion of dethiobiotin (DTB) to biotin by the insertion of a sulfur atom into dethiobiotin via a radical-based mechanism. The sequence is that of Biotin synthase from Yersinia enterocolitica serotype O:8 / biotype 1B (strain NCTC 13174 / 8081).